The sequence spans 456 residues: Antigen Lp49 (456 aa).

The first 34 residues, 1–34 (MNSNPKKKFLKLIKIKSDIILLIPIFLFLVCCKS), serve as a signal peptide directing secretion. Cysteine 346 and cysteine 347 are joined by a disulfide.

It is found in the cell outer membrane. Functionally, may be involved in virulence. Binds human plasminogen (PLG) and stimulates its proteolytic cleavage to enzymatically active plasmin in the presence of an urokinase-type PLG activator in vitro. Activated plasmin has proteolytic activity which may help the bacteria to spread throughout the host by degrading extracellular matrix components, facilitating tissue penetration and invasion. In Leptospira interrogans serogroup Icterohaemorrhagiae serovar copenhageni (strain Fiocruz L1-130), this protein is Antigen Lp49.